The following is a 122-amino-acid chain: Large ribosomal subunit protein uL14 (122 aa).

This sequence belongs to the universal ribosomal protein uL14 family. As to quaternary structure, part of the 50S ribosomal subunit. Forms a cluster with proteins L3 and L19. In the 70S ribosome, L14 and L19 interact and together make contacts with the 16S rRNA in bridges B5 and B8.

Functionally, binds to 23S rRNA. Forms part of two intersubunit bridges in the 70S ribosome. This is Large ribosomal subunit protein uL14 from Cytophaga hutchinsonii (strain ATCC 33406 / DSM 1761 / CIP 103989 / NBRC 15051 / NCIMB 9469 / D465).